The primary structure comprises 275 residues: Glucosamine-6-phosphate deaminase 2 (275 aa).

Catalysis depends on D72, which acts as the Proton acceptor; for enolization step. Positions 103–131 (NAHILDGNASDLQAECEDFERKIKEAGGI) form a coiled coil. The For ring-opening step role is filled by D141. H143 functions as the Proton acceptor; for ring-opening step in the catalytic mechanism. E148 functions as the For ring-opening step in the catalytic mechanism.

It belongs to the glucosamine/galactosamine-6-phosphate isomerase family. As to quaternary structure, homohexamer.

It localises to the cytoplasm. The catalysed reaction is alpha-D-glucosamine 6-phosphate + H2O = beta-D-fructose 6-phosphate + NH4(+). In terms of biological role, catalyzes the reversible conversion of alpha-D-glucosamine 6-phosphate (GlcN-6P) into beta-D-fructose 6-phosphate (Fru-6P) and ammonium ion, a regulatory reaction step in de novo uridine diphosphate-N-acetyl-alpha-D-glucosamine (UDP-GlcNAc) biosynthesis via hexosamine pathway. The sequence is that of Glucosamine-6-phosphate deaminase 2 from Xenopus tropicalis (Western clawed frog).